Consider the following 484-residue polypeptide: 3-isopropylmalate dehydratase large subunit (484 aa).

Positions 352, 412, and 415 each coordinate [4Fe-4S] cluster. A disordered region spans residues 462–484 (GTLSSPSDLDPAPESAAVSSSAA).

It belongs to the aconitase/IPM isomerase family. LeuC type 1 subfamily. Heterodimer of LeuC and LeuD. It depends on [4Fe-4S] cluster as a cofactor.

It carries out the reaction (2R,3S)-3-isopropylmalate = (2S)-2-isopropylmalate. The protein operates within amino-acid biosynthesis; L-leucine biosynthesis; L-leucine from 3-methyl-2-oxobutanoate: step 2/4. In terms of biological role, catalyzes the isomerization between 2-isopropylmalate and 3-isopropylmalate, via the formation of 2-isopropylmaleate. The polypeptide is 3-isopropylmalate dehydratase large subunit (Arthrobacter sp. (strain FB24)).